The chain runs to 372 residues: DNA/RNA-binding protein ALBA4 (372 aa).

The protein belongs to the histone-like Alba family. In terms of assembly, identified in a TARE6-associated complex consisting of over 30 proteins and including ALBA1, ALBA2 and ALBA4; the complex binds to the non-coding subtelomeric repeat region TARE6.

It is found in the nucleus. Its subcellular location is the chromosome. The protein resides in the telomere. It localises to the cytoplasm. In terms of biological role, possesses DNA- and RNA-binding activities. Binds to DNA fragments longer than 14 base pairs with relaxed sequence specificity. Associates with the subtelomeric TARE6 repeats. Regulates the abundance of transcript sub-populations in a stage-specific manner. Regulates activation of male gametocytes. Participates in the coordination of sporozoite development in the oocyst. The sequence is that of DNA/RNA-binding protein ALBA4 from Plasmodium falciparum (isolate 3D7).